A 507-amino-acid polypeptide reads, in one-letter code: ATP synthase subunit alpha, chloroplastic (507 aa).

170–177 lines the ATP pocket; it reads GDRQTGKT.

The protein belongs to the ATPase alpha/beta chains family. In terms of assembly, F-type ATPases have 2 components, CF(1) - the catalytic core - and CF(0) - the membrane proton channel. CF(1) has five subunits: alpha(3), beta(3), gamma(1), delta(1), epsilon(1). CF(0) has four main subunits: a, b, b' and c.

It localises to the plastid. The protein localises to the chloroplast thylakoid membrane. The catalysed reaction is ATP + H2O + 4 H(+)(in) = ADP + phosphate + 5 H(+)(out). In terms of biological role, produces ATP from ADP in the presence of a proton gradient across the membrane. The alpha chain is a regulatory subunit. The sequence is that of ATP synthase subunit alpha, chloroplastic from Anthoceros angustus (Hornwort).